Reading from the N-terminus, the 68-residue chain is U1-hexatoxin-Hv1a (68 aa).

Intrachain disulfides connect C3/C14, C8/C22, C13/C48, C32/C56, and C50/C63.

Belongs to the MIT-like AcTx family. Expressed by the venom gland.

The protein resides in the secreted. The sequence is that of U1-hexatoxin-Hv1a from Hadronyche versuta (Blue mountains funnel-web spider).